Consider the following 149-residue polypeptide: Transcriptional repressor NrdR (149 aa).

The segment at 3–34 is a zinc-finger region; the sequence is CPFCSATDTKVIDSRLVSDGHQVRRRRQCLAC. Residues 49-139 enclose the ATP-cone domain; it reads PKVIKSNGNR…VYRSFEDIKE (91 aa).

This sequence belongs to the NrdR family. Zn(2+) serves as cofactor.

Functionally, negatively regulates transcription of bacterial ribonucleotide reductase nrd genes and operons by binding to NrdR-boxes. In Aliivibrio salmonicida (strain LFI1238) (Vibrio salmonicida (strain LFI1238)), this protein is Transcriptional repressor NrdR.